The sequence spans 200 residues: MTENAISDCLNVLDSTRTLCLRIHELKQHSRDADDQNPEQIKRQLMSKLLILREANRKSYEQLVQAKTITAEHKSELDNARIRLQALQYKKLHLKTIIKNYEEKEHIYTALPLVSKEEFLKEHPEFKSSNDHDLMLAILEDELKERQRLSTLKQELLKRKAALISENKAKRNALQKGDEKLQTFLRSSVPVQEYYNITSM.

The protein belongs to the THOC5 family. In terms of assembly, component of the THO and TREX complexes.

It is found in the cytoplasm. Its subcellular location is the nucleus. Component the THO subcomplex of the TREX complex, which operates in coupling transcription elongation to mRNA export. The THO complex is recruited to transcribed genes and moves along the gene with the elongating polymerase during transcription. THO is important for stabilizing nascent RNA in the RNA polymerase II elongation complex by preventing formation of DNA:RNA hybrids behind the elongating polymerase. The THO complex is also required to maintain TRAMP complex occupancy at sites of snoRNA transcription thus promoting exosome-mediated degradation of snoRNA precursors. The polypeptide is THO complex subunit tho5 (Schizosaccharomyces pombe (strain 972 / ATCC 24843) (Fission yeast)).